The chain runs to 397 residues: Acetate kinase (397 aa).

Asn7 contributes to the Mg(2+) binding site. Position 14 (Lys14) interacts with ATP. Arg90 provides a ligand contact to substrate. Asp147 (proton donor/acceptor) is an active-site residue. ATP-binding positions include 207 to 211 (HLGNG), 282 to 284 (DFR), and 330 to 334 (GLGEN). Glu383 contacts Mg(2+).

This sequence belongs to the acetokinase family. Homodimer. The cofactor is Mg(2+). Mn(2+) is required as a cofactor.

It localises to the cytoplasm. The catalysed reaction is acetate + ATP = acetyl phosphate + ADP. It participates in metabolic intermediate biosynthesis; acetyl-CoA biosynthesis; acetyl-CoA from acetate: step 1/2. In terms of biological role, catalyzes the formation of acetyl phosphate from acetate and ATP. Can also catalyze the reverse reaction. The chain is Acetate kinase from Clostridium botulinum (strain Langeland / NCTC 10281 / Type F).